The following is an 88-amino-acid chain: UPF0237 protein SMU_72 (88 aa).

An ACT domain is found at 4–77; sequence IITVVGKDRT…ETLNVKINIQ (74 aa).

Belongs to the UPF0237 family. In terms of assembly, homodimer.

The sequence is that of UPF0237 protein SMU_72 from Streptococcus mutans serotype c (strain ATCC 700610 / UA159).